The chain runs to 507 residues: Histidine ammonia-lyase (507 aa).

The 5-imidazolinone (Ala-Gly) cross-link spans 142–144; it reads ASG. A 2,3-didehydroalanine (Ser) modification is found at Ser143.

It belongs to the PAL/histidase family. In terms of processing, contains an active site 4-methylidene-imidazol-5-one (MIO), which is formed autocatalytically by cyclization and dehydration of residues Ala-Ser-Gly.

It localises to the cytoplasm. The enzyme catalyses L-histidine = trans-urocanate + NH4(+). It functions in the pathway amino-acid degradation; L-histidine degradation into L-glutamate; N-formimidoyl-L-glutamate from L-histidine: step 1/3. This Maricaulis maris (strain MCS10) (Caulobacter maris) protein is Histidine ammonia-lyase.